Reading from the N-terminus, the 121-residue chain is Small ribosomal subunit protein uS13 (121 aa).

The interval 94-121 is disordered; that stretch reads GLPLRGQRTRTNARTRKGPRRAAQALKK.

This sequence belongs to the universal ribosomal protein uS13 family. In terms of assembly, part of the 30S ribosomal subunit. Forms a loose heterodimer with protein S19. Forms two bridges to the 50S subunit in the 70S ribosome.

Located at the top of the head of the 30S subunit, it contacts several helices of the 16S rRNA. In the 70S ribosome it contacts the 23S rRNA (bridge B1a) and protein L5 of the 50S subunit (bridge B1b), connecting the 2 subunits; these bridges are implicated in subunit movement. Contacts the tRNAs in the A and P-sites. This is Small ribosomal subunit protein uS13 from Burkholderia mallei (strain NCTC 10247).